The following is a 151-amino-acid chain: FAD synthase (151 aa).

ATP contacts are provided by residues 21–22 (TF), 26–29 (HPGH), and Asp-104.

The protein belongs to the archaeal FAD synthase family. As to quaternary structure, homodimer. The cofactor is a divalent metal cation.

The catalysed reaction is FMN + ATP + H(+) = FAD + diphosphate. It functions in the pathway cofactor biosynthesis; FAD biosynthesis; FAD from FMN: step 1/1. In terms of biological role, catalyzes the transfer of the AMP portion of ATP to flavin mononucleotide (FMN) to produce flavin adenine dinucleotide (FAD) coenzyme. The sequence is that of FAD synthase from Methanosarcina mazei (strain ATCC BAA-159 / DSM 3647 / Goe1 / Go1 / JCM 11833 / OCM 88) (Methanosarcina frisia).